We begin with the raw amino-acid sequence, 182 residues long: Ribulose bisphosphate carboxylase small subunit, chloroplastic 6 (182 aa).

The transit peptide at 1-41 (MAATMMSKTIISSKQCSKPIAPPKVSINKGFVNTSAAIKNR) directs the protein to the chloroplast.

It belongs to the RuBisCO small chain family. In terms of assembly, heterohexadecamer of 8 large and 8 small subunits.

The protein localises to the plastid. Its subcellular location is the chloroplast. Its function is as follows. RuBisCO catalyzes two reactions: the carboxylation of D-ribulose 1,5-bisphosphate, the primary event in carbon dioxide fixation, as well as the oxidative fragmentation of the pentose substrate. Both reactions occur simultaneously and in competition at the same active site. Although the small subunit is not catalytic it is essential for maximal activity. This chain is Ribulose bisphosphate carboxylase small subunit, chloroplastic 6, found in Acetabularia peniculus (Green alga).